Here is a 323-residue protein sequence, read N- to C-terminus: tRNA U34 carboxymethyltransferase (323 aa).

Carboxy-S-adenosyl-L-methionine-binding positions include Lys91, Trp105, Lys110, Gly130, Ile180–Glu181, Met196, Tyr200, and Arg315.

Belongs to the class I-like SAM-binding methyltransferase superfamily. CmoB family. In terms of assembly, homotetramer.

The enzyme catalyses carboxy-S-adenosyl-L-methionine + 5-hydroxyuridine(34) in tRNA = 5-carboxymethoxyuridine(34) in tRNA + S-adenosyl-L-homocysteine + H(+). Catalyzes carboxymethyl transfer from carboxy-S-adenosyl-L-methionine (Cx-SAM) to 5-hydroxyuridine (ho5U) to form 5-carboxymethoxyuridine (cmo5U) at position 34 in tRNAs. The protein is tRNA U34 carboxymethyltransferase of Geobacter sp. (strain M21).